A 299-amino-acid chain; its full sequence is Regucalcin (299 aa).

E18 contacts a divalent metal cation. Substrate-binding residues include R101, N103, and E121. Position 144 is an N6-succinyllysine (K144). N154 and D204 together coordinate a divalent metal cation. Residue D204 is the Proton donor/acceptor of the active site. An N6-succinyllysine mark is found at K244 and K253.

The protein belongs to the SMP-30/CGR1 family. Monomer. Zn(2+) serves as cofactor. The cofactor is Mn(2+). Ca(2+) is required as a cofactor. It depends on Mg(2+) as a cofactor.

It localises to the cytoplasm. It carries out the reaction D-glucono-1,5-lactone + H2O = D-gluconate + H(+). The protein operates within cofactor biosynthesis; L-ascorbate biosynthesis via UDP-alpha-D-glucuronate pathway; L-ascorbate from UDP-alpha-D-glucuronate: step 3/4. Gluconolactonase with low activity towards other sugar lactones, including gulonolactone and galactonolactone. Catalyzes a key step in ascorbic acid (vitamin C) biosynthesis. Can also hydrolyze diisopropyl phosphorofluoridate and phenylacetate (in vitro). Calcium-binding protein. Modulates Ca(2+) signaling, and Ca(2+)-dependent cellular processes and enzyme activities. This is Regucalcin (RGN) from Oryctolagus cuniculus (Rabbit).